A 214-amino-acid polypeptide reads, in one-letter code: ATP phosphoribosyltransferase (214 aa).

It belongs to the ATP phosphoribosyltransferase family. Short subfamily. As to quaternary structure, heteromultimer composed of HisG and HisZ subunits.

It localises to the cytoplasm. It catalyses the reaction 1-(5-phospho-beta-D-ribosyl)-ATP + diphosphate = 5-phospho-alpha-D-ribose 1-diphosphate + ATP. It functions in the pathway amino-acid biosynthesis; L-histidine biosynthesis; L-histidine from 5-phospho-alpha-D-ribose 1-diphosphate: step 1/9. Functionally, catalyzes the condensation of ATP and 5-phosphoribose 1-diphosphate to form N'-(5'-phosphoribosyl)-ATP (PR-ATP). Has a crucial role in the pathway because the rate of histidine biosynthesis seems to be controlled primarily by regulation of HisG enzymatic activity. The sequence is that of ATP phosphoribosyltransferase from Streptococcus gordonii (strain Challis / ATCC 35105 / BCRC 15272 / CH1 / DL1 / V288).